Here is a 155-residue protein sequence, read N- to C-terminus: Protein-export protein SecB (155 aa).

This sequence belongs to the SecB family. As to quaternary structure, homotetramer, a dimer of dimers. One homotetramer interacts with 1 SecA dimer.

It localises to the cytoplasm. In terms of biological role, one of the proteins required for the normal export of preproteins out of the cell cytoplasm. It is a molecular chaperone that binds to a subset of precursor proteins, maintaining them in a translocation-competent state. It also specifically binds to its receptor SecA. This Citrobacter koseri (strain ATCC BAA-895 / CDC 4225-83 / SGSC4696) protein is Protein-export protein SecB.